The chain runs to 129 residues: Large ribosomal subunit protein bL21 (129 aa).

Residues 100–129 (DGAKPSKKAAEKKAPKAAPKKAAAKAESAE) form a disordered region.

The protein belongs to the bacterial ribosomal protein bL21 family. As to quaternary structure, part of the 50S ribosomal subunit. Contacts protein L20.

Its function is as follows. This protein binds to 23S rRNA in the presence of protein L20. In Brucella anthropi (strain ATCC 49188 / DSM 6882 / CCUG 24695 / JCM 21032 / LMG 3331 / NBRC 15819 / NCTC 12168 / Alc 37) (Ochrobactrum anthropi), this protein is Large ribosomal subunit protein bL21.